A 527-amino-acid polypeptide reads, in one-letter code: Putative adhesin P1-like protein MPN_500 (527 aa).

Disordered stretches follow at residues Met-1–Ser-26, Gly-76–Tyr-148, Ala-248–Ser-269, and Phe-468–His-527. Residues Thr-9–Ser-26 are compositionally biased toward low complexity. Polar residues predominate over residues Thr-82–Phe-95. Residues Ser-108–Asn-117 are compositionally biased toward low complexity. The segment covering Gln-128–Tyr-148 has biased composition (polar residues). Residues Ala-248–Gly-262 are compositionally biased toward low complexity. Residues Phe-468–Leu-495 show a composition bias toward polar residues. A compositionally biased stretch (gly residues) spans Ser-500–Gln-513.

This sequence belongs to the adhesin P1 family.

The polypeptide is Putative adhesin P1-like protein MPN_500 (Mycoplasma pneumoniae (strain ATCC 29342 / M129 / Subtype 1) (Mycoplasmoides pneumoniae)).